A 402-amino-acid chain; its full sequence is Protein FAM221B (402 aa).

Residues 1-35 are compositionally biased toward basic and acidic residues; it reads MEAHEIIEEPHITMDAEKHPPSKDPSAEDLQENHI. Disordered regions lie at residues 1–205 and 378–402; these read MEAH…TARP and DTQK…HRPL. Polar residues-rich tracts occupy residues 77–90 and 393–402; these read EPSI…TPTY and DTVSNWHRPL.

This sequence belongs to the FAM221 family.

This is Protein FAM221B (FAM221B) from Homo sapiens (Human).